A 341-amino-acid chain; its full sequence is MPVNNKDINILGIETSCDETSAAVLRNGCELLSHIISSQIKTHQKYGGVVPEVASREHILHLQSVVEQALQEAKMGFGDLAGIAVTYGPGLVGSLLVGVAGAKAMAYGAGIPLLGVNHLEGHIYANFLHNPGLKFPLLALLVSGGHSHLVYFEGHGKYQVLGQTRDDAAGEALDKVARTLGLGYPGGPYIQKAALEGNPHAYEFPRAMLEPGSLDFSFSGVKSAVLNTLNSARMKGETVNVADVAASFQEAIVDVLVRKTLLALARTKAPTLVLAGGVAANTLLRERLTEATQKRGIAFSYPPPILCTDNGAMIATAGYYRYLDKDYAPWNLNAIPGLNLA.

Fe cation is bound by residues His-118 and His-122. Residues 141-145, Asp-174, Gly-187, and Asn-281 each bind substrate; that span reads LVSGG. Asp-309 is a binding site for Fe cation.

Belongs to the KAE1 / TsaD family. It depends on Fe(2+) as a cofactor.

The protein resides in the cytoplasm. The enzyme catalyses L-threonylcarbamoyladenylate + adenosine(37) in tRNA = N(6)-L-threonylcarbamoyladenosine(37) in tRNA + AMP + H(+). Required for the formation of a threonylcarbamoyl group on adenosine at position 37 (t(6)A37) in tRNAs that read codons beginning with adenine. Is involved in the transfer of the threonylcarbamoyl moiety of threonylcarbamoyl-AMP (TC-AMP) to the N6 group of A37, together with TsaE and TsaB. TsaD likely plays a direct catalytic role in this reaction. The polypeptide is tRNA N6-adenosine threonylcarbamoyltransferase (Desulfitobacterium hafniense (strain Y51)).